The sequence spans 162 residues: Protein-export protein SecB (162 aa).

The protein belongs to the SecB family. As to quaternary structure, homotetramer, a dimer of dimers. One homotetramer interacts with 1 SecA dimer.

It localises to the cytoplasm. One of the proteins required for the normal export of preproteins out of the cell cytoplasm. It is a molecular chaperone that binds to a subset of precursor proteins, maintaining them in a translocation-competent state. It also specifically binds to its receptor SecA. The chain is Protein-export protein SecB from Pseudoalteromonas translucida (strain TAC 125).